The following is a 281-amino-acid chain: Imidazoleglycerol-phosphate dehydratase, chloroplastic (281 aa).

Residues 1–85 constitute a chloroplast transit peptide; the sequence is MELYAASHSL…TSLPFHPETR (85 aa). Substrate is bound by residues Glu95, 121 to 129, 147 to 151, Arg173, and Arg195; these read HMLDQLASH and HHTNE. His121, His147, His148, and Glu151 together coordinate Mn(2+). 4 residues coordinate Mn(2+): His219, His243, His244, and Glu247. Substrate contacts are provided by residues 243 to 251 and 273 to 275; these read HHIIEATFK and SSK.

Belongs to the imidazoleglycerol-phosphate dehydratase family. Mn(2+) is required as a cofactor.

It localises to the plastid. The protein resides in the chloroplast. The enzyme catalyses D-erythro-1-(imidazol-4-yl)glycerol 3-phosphate = 3-(imidazol-4-yl)-2-oxopropyl phosphate + H2O. The protein operates within amino-acid biosynthesis; L-histidine biosynthesis; L-histidine from 5-phospho-alpha-D-ribose 1-diphosphate: step 6/9. This is Imidazoleglycerol-phosphate dehydratase, chloroplastic from Pisum sativum (Garden pea).